A 484-amino-acid polypeptide reads, in one-letter code: Glutamyl-tRNA(Gln) amidotransferase subunit A (484 aa).

Residues Lys74 and Ser149 each act as charge relay system in the active site. The active-site Acyl-ester intermediate is the Ser173.

It belongs to the amidase family. GatA subfamily. Heterotrimer of A, B and C subunits.

The catalysed reaction is L-glutamyl-tRNA(Gln) + L-glutamine + ATP + H2O = L-glutaminyl-tRNA(Gln) + L-glutamate + ADP + phosphate + H(+). In terms of biological role, allows the formation of correctly charged Gln-tRNA(Gln) through the transamidation of misacylated Glu-tRNA(Gln) in organisms which lack glutaminyl-tRNA synthetase. The reaction takes place in the presence of glutamine and ATP through an activated gamma-phospho-Glu-tRNA(Gln). This is Glutamyl-tRNA(Gln) amidotransferase subunit A from Prochlorococcus marinus subsp. pastoris (strain CCMP1986 / NIES-2087 / MED4).